A 501-amino-acid polypeptide reads, in one-letter code: Lysine--tRNA ligase (501 aa).

The Mg(2+) site is built by Glu402 and Glu409.

It belongs to the class-II aminoacyl-tRNA synthetase family. As to quaternary structure, homodimer. The cofactor is Mg(2+).

Its subcellular location is the cytoplasm. It carries out the reaction tRNA(Lys) + L-lysine + ATP = L-lysyl-tRNA(Lys) + AMP + diphosphate. The chain is Lysine--tRNA ligase (lysS) from Helicobacter pylori (strain ATCC 700392 / 26695) (Campylobacter pylori).